We begin with the raw amino-acid sequence, 356 residues long: S-adenosylmethionine:tRNA ribosyltransferase-isomerase (356 aa).

This sequence belongs to the QueA family. As to quaternary structure, monomer.

Its subcellular location is the cytoplasm. The catalysed reaction is 7-aminomethyl-7-carbaguanosine(34) in tRNA + S-adenosyl-L-methionine = epoxyqueuosine(34) in tRNA + adenine + L-methionine + 2 H(+). It participates in tRNA modification; tRNA-queuosine biosynthesis. Transfers and isomerizes the ribose moiety from AdoMet to the 7-aminomethyl group of 7-deazaguanine (preQ1-tRNA) to give epoxyqueuosine (oQ-tRNA). The polypeptide is S-adenosylmethionine:tRNA ribosyltransferase-isomerase (Xanthomonas axonopodis pv. citri (strain 306)).